The following is a 444-amino-acid chain: sn-glycerol-3-phosphate-binding periplasmic protein UgpB (444 aa).

The N-terminal stretch at 1 to 30 (MFNNTIRKTHAIRTAAACVAFALMSAGAQA) is a signal peptide. Residues tyrosine 72, glutamate 96, serine 151, serine 277, glycine 314, tyrosine 353, and arginine 404 each coordinate sn-glycerol 3-phosphate.

It belongs to the bacterial solute-binding protein 1 family. In terms of assembly, the complex is composed of two ATP-binding proteins (UgpC), two transmembrane proteins (UgpA and UgpE) and a solute-binding protein (UgpB).

It localises to the periplasm. Its function is as follows. Part of the ABC transporter complex UgpBAEC involved in sn-glycerol-3-phosphate (G3P) import. Binds G3P. This Pectobacterium atrosepticum (strain SCRI 1043 / ATCC BAA-672) (Erwinia carotovora subsp. atroseptica) protein is sn-glycerol-3-phosphate-binding periplasmic protein UgpB (ugpB).